The sequence spans 189 residues: Small ribosomal subunit protein uS5 (189 aa).

The S5 DRBM domain occupies 27–90 (FEERLLEAAR…EDAKKKTIRV (64 aa)).

The protein belongs to the universal ribosomal protein uS5 family. In terms of assembly, part of the 30S ribosomal subunit. Contacts proteins S4 and S8.

With S4 and S12 plays an important role in translational accuracy. Its function is as follows. Located at the back of the 30S subunit body where it stabilizes the conformation of the head with respect to the body. In Hydrogenobaculum sp. (strain Y04AAS1), this protein is Small ribosomal subunit protein uS5.